Consider the following 510-residue polypeptide: Flagellin A (510 aa).

This sequence belongs to the bacterial flagellin family. In terms of assembly, heteromer of FlaA and FlaB. FlaB is located proximal to the hook while the remainder of the filament is composed of the predominant FlaA.

It is found in the secreted. Its subcellular location is the bacterial flagellum. Its function is as follows. Flagellin is the subunit protein which polymerizes to form the filaments of bacterial flagella. Important for motility and virulence. The sequence is that of Flagellin A (flaA) from Helicobacter pylori (strain ATCC 700392 / 26695) (Campylobacter pylori).